The sequence spans 109 residues: Aquaporin-2 (109 aa).

Over 1–6 the chain is Cytoplasmic; the sequence is SIAFSR. Residues 7–27 traverse the membrane as a helical segment; the sequence is AVLSEFLATLLFVFFGLGSAL. The Extracellular segment spans residues 28–35; sequence NWPQALPS. A helical transmembrane segment spans residues 36 to 54; it reads VLQIAMAFGLAIGTLVQTL. At 55 to 59 the chain is on the cytoplasmic side; the sequence is GHISG. Residues 60-69 constitute an intramembrane region (discontinuously helical); the sequence is AHINPAVTIA. The short motif at 63 to 65 is the NPA 1 element; the sequence is NPA. At 70–80 the chain is on the cytoplasmic side; sequence CLVGCHVSFLR. Residues 81-102 form a helical membrane-spanning segment; the sequence is ALFYLAAQLLGAVAGAALLHEL. Residues 103–109 are Extracellular-facing; sequence TPPDIRG.

This sequence belongs to the MIP/aquaporin (TC 1.A.8) family. In terms of assembly, homotetramer. Post-translationally, serine phosphorylation is necessary and sufficient for expression at the apical membrane. Endocytosis is not phosphorylation-dependent. N-glycosylated.

The protein localises to the apical cell membrane. It localises to the basolateral cell membrane. The protein resides in the cell membrane. Its subcellular location is the cytoplasmic vesicle membrane. It is found in the golgi apparatus. The protein localises to the trans-Golgi network membrane. It carries out the reaction H2O(in) = H2O(out). The enzyme catalyses glycerol(in) = glycerol(out). Its function is as follows. Forms a water-specific channel that provides the plasma membranes of renal collecting duct with high permeability to water, thereby permitting water to move in the direction of an osmotic gradient. Plays an essential role in renal water homeostasis. Could also be permeable to glycerol. In Procavia capensis habessinica (Abyssinian hyrax), this protein is Aquaporin-2.